We begin with the raw amino-acid sequence, 670 residues long: Solute carrier organic anion transporter family member 1A2 (670 aa).

Over 1–20 the chain is Cytoplasmic; that stretch reads MGETEKRIETHRIRCLSKLK. A helical transmembrane segment spans residues 21–40; sequence MFLLAITCAFVSKTLSGSYM. Residues 41-59 lie on the Extracellular side of the membrane; that stretch reads NSMLTQIERQFNIPTSLVG. Residues 60–80 form a helical membrane-spanning segment; the sequence is FINGSFEIGNLLLIIFVSYFG. Over 81-86 the chain is Cytoplasmic; the sequence is TKLHRP. The chain crosses the membrane as a helical span at residues 87-111; that stretch reads IMIGIGCVVMGLGCFLKSLPHFLMN. Residues 112-155 are Extracellular-facing; the sequence is QYEYESTVSVSGNLSSNSFLCMENGTQILRPTQDPSECTKEVKS. N-linked (GlcNAc...) asparagine glycans are attached at residues N124 and N135. The helical transmembrane segment at 156-184 threads the bilayer; it reads LMWVYVLVGNIVRGMGETPILPLGISYIE. Residues 185–203 are Cytoplasmic-facing; sequence DFAKFENSPLYIGLVETGA. A helical transmembrane segment spans residues 204-224; the sequence is IIGPLIGLLLASFCANVYVDT. Residues 225-242 lie on the Extracellular side of the membrane; sequence GFVNTDDLIITPTDTRWV. Residues 243–267 traverse the membrane as a helical segment; the sequence is GAWWFGFLICAGVNVLTAIPFFFLP. The Cytoplasmic portion of the chain corresponds to 268–311; the sequence is NTLPKEGLETNADIIKNENEDKQKEEVKKEKYGITKDFLPFMKS. Residues 312–333 traverse the membrane as a helical segment; sequence LSCNPIYMLFILVSVIQFNAFV. Topologically, residues 334–353 are extracellular; sequence NMISFMPKYLEQQYGISSSD. The chain crosses the membrane as a helical span at residues 354–377; that stretch reads AIFLMGIYNLPPICIGYIIGGLIM. Residues 378–381 lie on the Cytoplasmic side of the membrane; sequence KKFK. A helical transmembrane segment spans residues 382–405; that stretch reads ITVKQAAHIGCWLSLLEYLLYFLS. Residues 406–513 are Extracellular-facing; the sequence is FLMTCENSSV…PDCSLMLQYF (108 aa). N412 and N419 each carry an N-linked (GlcNAc...) asparagine glycan. The Kazal-like domain maps to 433-488; the sequence is NDIFADCNVDCNCPSKIWDPVCGNNGLSYLSACLAGCETSIGTGINMVFQNCSCIQ. 3 cysteine pairs are disulfide-bonded: C439-C469, C445-C465, and C454-C486. Residues 514-536 form a helical membrane-spanning segment; sequence LILSAMSSFIYSLAAIPGYMVLL. At 537–545 the chain is on the cytoplasmic side; that stretch reads RCMKSEEKS. A helical membrane pass occupies residues 546 to 571; that stretch reads LGVGLHTFCTRVFAGIPAPIYFGALM. The Extracellular portion of the chain corresponds to 572–605; the sequence is DSTCLHWGTLKCGESGACRIYDSTTFRYIYLGLP. Residues 606-623 form a helical membrane-spanning segment; that stretch reads AALRGSSFVPALIILILL. Residues 624-670 are Cytoplasmic-facing; the sequence is RKCHLPGENASSGTELIETKVKGKENECKDIYQKSTVLKDDELKTKL.

It belongs to the organo anion transporter (TC 2.A.60) family. In terms of tissue distribution, higher expression in the brain than in liver and kidney. Expressed in brain neurons in both cortex and hippocampus. Expressed in placental trophoblasts. Also expressed in lung and testes at lower levels. Expressed in the eye (at protein level). Expressed in the retina in the outer and inner nuclear layers, the inner plexiform layer and the ganglion cell layer. Expressed in liver and prostate. In testis, primarily localized to the basal membrane of Sertoli cells and weakly expressed in Leydig cells and within the tubules. Expressed in fetal brain and liver.

The protein localises to the cell membrane. Its subcellular location is the basal cell membrane. The enzyme catalyses taurocholate(out) = taurocholate(in). The catalysed reaction is glycocholate(out) = glycocholate(in). It carries out the reaction taurochenodeoxycholate(out) = taurochenodeoxycholate(in). It catalyses the reaction tauroursodeoxycholate(out) = tauroursodeoxycholate(in). The enzyme catalyses dehydroepiandrosterone 3-sulfate(out) = dehydroepiandrosterone 3-sulfate(in). The catalysed reaction is estrone 3-sulfate(out) = estrone 3-sulfate(in). It carries out the reaction 3,3',5'-triiodo-L-thyronine(out) = 3,3',5'-triiodo-L-thyronine(in). It catalyses the reaction L-thyroxine(out) = L-thyroxine(in). The enzyme catalyses taurodeoxycholate(out) = taurodeoxycholate(in). The catalysed reaction is glycodeoxycholate(out) = glycodeoxycholate(in). It carries out the reaction glycochenodeoxycholate(out) = glycochenodeoxycholate(in). It catalyses the reaction glycoursodeoxycholate(out) = glycoursodeoxycholate(in). The enzyme catalyses 17beta-estradiol 17-O-(beta-D-glucuronate)(out) = 17beta-estradiol 17-O-(beta-D-glucuronate)(in). The catalysed reaction is prostaglandin E2(out) = prostaglandin E2(in). It carries out the reaction substance P(out) = substance P(in). Its activity is regulated as follows. Transport activity is inhibited by the grapefruit juice component naringin. Its function is as follows. Na(+)-independent transporter that mediates the cellular uptake of a broad range of organic anions such as the endogenous bile salts cholate and deoxycholate, either in their unconjugated or conjugated forms (taurocholate and glycocholate), at the plasmam membrane. Responsible for intestinal absorption of bile acids. Transports dehydroepiandrosterone 3-sulfate (DHEAS), a major circulating steroid secreted by the adrenal cortex, as well as estrone 3-sulfate and 17beta-estradiol 17-O-(beta-D-glucuronate). Mediates apical uptake of all-trans-retinol (atROL) across human retinal pigment epithelium, which is essential to maintaining the integrity of the visual cycle and thus vision. Involved in the uptake of clinically used drugs. Capable of thyroid hormone transport (both T3 or 3,3',5'-triiodo-L-thyronine, and T4 or L-tyroxine). Also transports prostaglandin E2. Plays roles in blood-brain and -cerebrospinal fluid barrier transport of organic anions and signal mediators, and in hormone uptake by neural cells. May also play a role in the reuptake of neuropeptides such as substance P/TAC1 and vasoactive intestinal peptide/VIP released from retinal neurons. May play an important role in plasma and tissue distribution of the structurally diverse chemotherapeutic drugs methotrexate and paclitaxel. Shows a pH-sensitive substrate specificity which may be ascribed to the protonation state of the binding site and leads to a stimulation of substrate transport in an acidic microenvironment. Hydrogencarbonate/HCO3(-) acts as the probable counteranion that exchanges for organic anions. May contribute to regulate the transport of organic compounds in testis across the blood-testis-barrier. This Homo sapiens (Human) protein is Solute carrier organic anion transporter family member 1A2 (SLCO1A2).